Here is a 162-residue protein sequence, read N- to C-terminus: Peptide methionine sulfoxide reductase MsrA (162 aa).

The active site involves Cys16.

Belongs to the MsrA Met sulfoxide reductase family.

The catalysed reaction is L-methionyl-[protein] + [thioredoxin]-disulfide + H2O = L-methionyl-(S)-S-oxide-[protein] + [thioredoxin]-dithiol. It catalyses the reaction [thioredoxin]-disulfide + L-methionine + H2O = L-methionine (S)-S-oxide + [thioredoxin]-dithiol. In terms of biological role, has an important function as a repair enzyme for proteins that have been inactivated by oxidation. Catalyzes the reversible oxidation-reduction of methionine sulfoxide in proteins to methionine. The protein is Peptide methionine sulfoxide reductase MsrA of Geobacter sulfurreducens (strain ATCC 51573 / DSM 12127 / PCA).